The following is a 557-amino-acid chain: uncharacterized protein (557 aa).

A Helicase ATP-binding domain is found at 70-224 (KVVEKMNGKA…FNLVSLLKPG (155 aa)). 82-90 (ADEVGLGKT) is a binding site for ATP. Residues 175 to 178 (DEAH) carry the DEAH box motif. Residues 363-524 (QVVDLIKKID…NFEEHLHDIL (162 aa)) enclose the Helicase C-terminal domain.

This sequence belongs to the SNF2/RAD54 helicase family.

This is an uncharacterized protein from Bacillus subtilis (strain 168).